Here is a 638-residue protein sequence, read N- to C-terminus: 1-deoxy-D-xylulose-5-phosphate synthase (638 aa).

Thiamine diphosphate-binding positions include His71 and 112-114 (SHA). A Mg(2+)-binding site is contributed by Asp144. Thiamine diphosphate-binding positions include 145–146 (GA), Asn173, Tyr284, and Glu365. A Mg(2+)-binding site is contributed by Asn173.

It belongs to the transketolase family. DXPS subfamily. As to quaternary structure, homodimer. It depends on Mg(2+) as a cofactor. Thiamine diphosphate is required as a cofactor.

It catalyses the reaction D-glyceraldehyde 3-phosphate + pyruvate + H(+) = 1-deoxy-D-xylulose 5-phosphate + CO2. The protein operates within metabolic intermediate biosynthesis; 1-deoxy-D-xylulose 5-phosphate biosynthesis; 1-deoxy-D-xylulose 5-phosphate from D-glyceraldehyde 3-phosphate and pyruvate: step 1/1. In terms of biological role, catalyzes the acyloin condensation reaction between C atoms 2 and 3 of pyruvate and glyceraldehyde 3-phosphate to yield 1-deoxy-D-xylulose-5-phosphate (DXP). In Mycobacterium sp. (strain JLS), this protein is 1-deoxy-D-xylulose-5-phosphate synthase.